A 1458-amino-acid chain; its full sequence is DNA polymerase alpha catalytic subunit (1458 aa).

Disordered stretches follow at residues 1–25 and 89–119; these read MSDS…RKEA and DLED…SVSK. Over residues 15 to 25 the composition is skewed to basic and acidic residues; it reads EKTEKSGRKEA. 2 DNA-binding regions span residues 650-715 and 1241-1373; these read RINS…VHQI and QFRA…ACSK. Zn(2+) contacts are provided by C1280, C1283, C1307, C1312, C1345, C1350, C1368, and C1371. A CysA-type zinc finger spans residues 1280-1310; sequence CPKCGTENIYDNVFDGSGLQIEPGLKRCSKP. The short motif at 1345 to 1371 is the CysB motif element; it reads CEEKTCQNRTRRLPLSFSRNGPICQAC.

Belongs to the DNA polymerase type-B family. The DNA polymerase alpha complex is composed of four subunits: the catalytic subunit POLA1, the regulatory subunit POLA2, and the small and the large primase subunits PRIM1 and PRIM2 respectively. Interacts with PARP1; this interaction functions as part of the control of replication fork progression. Interacts with MCM10 and WDHD1; these interactions recruit the polymerase alpha complex to the pre-replicative complex bound to DNA. Interacts with RPA1; this interaction stabilizes the replicative complex and reduces the misincorporation rate of DNA polymerase alpha by acting as a fidelity clamp.

Its subcellular location is the nucleus. It catalyses the reaction DNA(n) + a 2'-deoxyribonucleoside 5'-triphosphate = DNA(n+1) + diphosphate. Its function is as follows. Plays an essential role in the initiation of DNA replication. During the S phase of the cell cycle, the DNA polymerase alpha complex (composed of a catalytic subunit POLA1/p180, a regulatory subunit POLA2/p70 and two primase subunits PRIM1/p49 and PRIM2/p58) is recruited to DNA at the replicative forks via direct interactions with MCM10 and WDHD1. The primase subunit of the polymerase alpha complex initiates DNA synthesis by oligomerising short RNA primers on both leading and lagging strands. These primers are initially extended by the polymerase alpha catalytic subunit and subsequently transferred to polymerase delta and polymerase epsilon for processive synthesis on the lagging and leading strand, respectively. The reason this transfer occurs is because the polymerase alpha has limited processivity and lacks intrinsic 3' exonuclease activity for proofreading error, and therefore is not well suited for replicating long complexes. This is DNA polymerase alpha catalytic subunit (pola1) from Xenopus laevis (African clawed frog).